Here is a 115-residue protein sequence, read N- to C-terminus: MNIMITLFINMSLASLLVLIAFWLPQLNTYTEKSSPYECGFDPMGSARLPFSMKFFLVAITFLLFDLEIALLLPLPWATQANTMTPMLTTALVLILLLALGLAYEWLQKGLEWNE.

The next 3 membrane-spanning stretches (helical) occupy residues 3 to 23 (IMIT…IAFW), 55 to 75 (FFLV…LLPL), and 87 to 107 (MLTT…YEWL).

Belongs to the complex I subunit 3 family. Core subunit of respiratory chain NADH dehydrogenase (Complex I) which is composed of 45 different subunits. Interacts with TMEM186. Interacts with TMEM242.

Its subcellular location is the mitochondrion inner membrane. The enzyme catalyses a ubiquinone + NADH + 5 H(+)(in) = a ubiquinol + NAD(+) + 4 H(+)(out). Functionally, core subunit of the mitochondrial membrane respiratory chain NADH dehydrogenase (Complex I) which catalyzes electron transfer from NADH through the respiratory chain, using ubiquinone as an electron acceptor. Essential for the catalytic activity of complex I. The protein is NADH-ubiquinone oxidoreductase chain 3 of Dasypus novemcinctus (Nine-banded armadillo).